The chain runs to 350 residues: MATLLLLPGDGIGPEVCAQVRRVAAALTPDLKVDEALYGGASYDTHGTPLTDEVREQALASDAVLMGAVGGPKWADAPRHLRPEAGLLNLRKAMDVFANLRPAYCFEALAGASSLKPELVSGLDIMFVRELVGGVYFGQPRGIEDLADGQKKGFDTQVYTTSEIERVGRVAFELARGRTNKVHSAEKSNVMESGLLWKQVITELHAREYPDVQLEHILADNCAMQLVRAPKQFDVIVTDNLFGDILSDAAAMLTGSLGMLPSAALGAPGKPGLYEPIHGSAPDIAGKGLANPLAAILSFEMALRWSLKQTEAADALLAAVKAALDNGARTRDLGGSLTTTQMGDAVLAAL.

Residue 71–84 (GPKWADAPRHLRPE) coordinates NAD(+). Residues Arg91, Arg101, Arg129, and Asp220 each coordinate substrate. 3 residues coordinate Mg(2+): Asp220, Asp244, and Asp248. Residue 279–291 (GSAPDIAGKGLAN) participates in NAD(+) binding.

It belongs to the isocitrate and isopropylmalate dehydrogenases family. LeuB type 1 subfamily. Homodimer. It depends on Mg(2+) as a cofactor. Mn(2+) serves as cofactor.

It localises to the cytoplasm. The enzyme catalyses (2R,3S)-3-isopropylmalate + NAD(+) = 4-methyl-2-oxopentanoate + CO2 + NADH. Its pathway is amino-acid biosynthesis; L-leucine biosynthesis; L-leucine from 3-methyl-2-oxobutanoate: step 3/4. In terms of biological role, catalyzes the oxidation of 3-carboxy-2-hydroxy-4-methylpentanoate (3-isopropylmalate) to 3-carboxy-4-methyl-2-oxopentanoate. The product decarboxylates to 4-methyl-2 oxopentanoate. This is 3-isopropylmalate dehydrogenase from Caulobacter vibrioides (strain ATCC 19089 / CIP 103742 / CB 15) (Caulobacter crescentus).